A 651-amino-acid polypeptide reads, in one-letter code: Sodium/potassium/calcium exchanger 2 (651 aa).

The Cytoplasmic segment spans residues 1 to 38 (MALCKKTVGSVLEEWCLNEPLFGCKRHQNVRKKLRLIR). The chain crosses the membrane as a helical span at residues 39–59 (IIGLLVSVVAISTFSLSISAF). The Extracellular portion of the chain corresponds to 60–134 (FKMETHSTVL…DLFSLEERRK (75 aa)). A disordered region spans residues 92–123 (QNEGSTPDSPTSMKHEAEHDNATEEHSKGEYP). The span at 93-103 (NEGSTPDSPTS) shows a compositional bias: polar residues. Over residues 104–122 (MKHEAEHDNATEEHSKGEY) the composition is skewed to basic and acidic residues. Residue N112 is glycosylated (N-linked (GlcNAc...) asparagine). The helical transmembrane segment at 135 to 155 (GAVILHVIGMIYMFIALAIVC) threads the bilayer. The Cytoplasmic portion of the chain corresponds to 156–179 (DEFFVPSLTVITEKLSISDDVAGA). An Alpha-1 repeat occupies 176-216 (VAGATFMAAGGSAPELFTSLIGVFISHSNVGIGTIVGSAVF). The chain crosses the membrane as a helical span at residues 180 to 200 (TFMAAGGSAPELFTSLIGVFI). The Extracellular segment spans residues 201-206 (SHSNVG). The helical transmembrane segment at 207 to 227 (IGTIVGSAVFNILFVIGMCAL) threads the bilayer. The Cytoplasmic portion of the chain corresponds to 228-245 (FSREILNLTWWPLFRDVS). The helical transmembrane segment at 246–266 (FYIVDLILLIIFFLDNLIMWW) threads the bilayer. The Extracellular segment spans residues 267–459 (ESLTLLTAYF…SLAWPDTPRK (193 aa)). Basic and acidic residues predominate over residues 304–322 (ATTGDAEGKSPTAGDKDDQ). The segment at 304 to 338 (ATTGDAEGKSPTAGDKDDQTLTTKPRLQRGGSSAS) is disordered. Polar residues predominate over residues 323–338 (TLTTKPRLQRGGSSAS). A helical transmembrane segment spans residues 460–480 (QLTYLLVLPIVFPLWVSLPDV). Topologically, residues 481–487 (RNPRSRK) are cytoplasmic. The helical transmembrane segment at 488–508 (FFPITFFGSISWIAFFSYLMV) threads the bilayer. Over 509 to 523 (WWAHQVGETIGISEE) the chain is Extracellular. A helical membrane pass occupies residues 524–544 (IMGLTILAAGTSIPDLITSVI). An Alpha-2 repeat occupies 531–562 (AAGTSIPDLITSVIVARKGLGDMAVSSSVGSN). Topologically, residues 545 to 562 (VARKGLGDMAVSSSVGSN) are cytoplasmic. Residues 563-583 (IFDITVGLPLPWLLYAVINNF) traverse the membrane as a helical segment. The Extracellular portion of the chain corresponds to 584 to 592 (SPVTVSSNG). The helical transmembrane segment at 593–613 (LFCAIVLLFIMLLFVILSIAF) threads the bilayer. Over 614 to 620 (CKWRMNK) the chain is Cytoplasmic. The helical transmembrane segment at 621–641 (FLGFLMFGLYFVFLIVSVLLE) threads the bilayer. The Extracellular segment spans residues 642-651 (DKVIQCPVSI).

It belongs to the Ca(2+):cation antiporter (CaCA) (TC 2.A.19) family. SLC24A subfamily. As to expression, retinal cones. Found in the cone inner segment layer and in a subpopulation of ganglion cells.

Its subcellular location is the cell membrane. The enzyme catalyses Ca(2+)(out) + K(+)(out) + 4 Na(+)(in) = Ca(2+)(in) + K(+)(in) + 4 Na(+)(out). Its function is as follows. Calcium, potassium:sodium antiporter that transports 1 Ca(2+) and 1 K(+) in exchange for 4 Na(+). Required for learming and memory by regulating neuronal Ca(2+), which is essential for the development of synaptic plasticity. The sequence is that of Sodium/potassium/calcium exchanger 2 (SLC24A2) from Gallus gallus (Chicken).